The sequence spans 810 residues: MRAKNGPGSWLALTAIATSLNTLALAAAKTINHSYEFNPVVVSGGGYITGIIAHPTEKNLLYARTDIGGTYRWNADEDKWIPLNDFISGADENLLGTESVALDPNDPDRLYLAQGRYLNSENSAFFVSQDRGATFDVYPAPFKMGANELGRNNGERLAVNPFKTDELWMGTRDAGLMVSEDGAQTWRNVSGFPQANANGIGIYWVIFDPRSEGTVYVGVGVPGGIYVTRDSGESWEAVPGQPVEWDEDILVFPAESQPQSTGPQPMKGVLAENGALYVTYADAPGPYGVTYGGVYVYNTTSSAWTNITPKTNNSFPAPFDNQTFPAGGFCGISVDSKNPERLVVVSLDRDPGPALDSMYLSHDGGKSWKDVSQLSTPSGSGGYWGHPIEEAAFKDGTAVPWLSFNWGPQWGGYGAPSPVRGLTKFGWWMTAVVIDPSDSDHVLYGTGATIWATDNLSKVDKNQSPGWYIQAQGIEESVALALASPNGGDSHLLTGLGDINGYRYGDLDVPQPMFDLPVLSNLNALDWAGQKPEIIIRAGPCGHNYTDGCGLAAYSADGGSSWTKFATCIPGINTSSSNPGVIAIDASGKDIVWSSAMTAYWPTLQAITPRTNQSGPYVTTDLGQTWVSPTGLNVQTPNISADRVQPRTFYSFTDGTWYLSRDGGLSYRAYKAKEVGLPAYSGALPIANFNRAGEIWLGLGDHGIYHTRNFGKKWTKITGRGVTARQLTIGAGARRSSEPTLFIVGKAASHGALSKDGVYRSDDNGKTWVRVNDEKHQYGGIAMIQGDPRVYGRVYLGTGGRGIIYADIKE.

The first 28 residues, Met-1–Ala-28, serve as a signal peptide directing secretion. N-linked (GlcNAc...) asparagine glycosylation is present at Asn-32. Asp-66 acts as the Nucleophile in catalysis. Residues Phe-126–Phe-135 form a BNR 1 repeat. Asn-188 is a glycosylation site (N-linked (GlcNAc...) asparagine). One copy of the BNR 2 repeat lies at Tyr-226 to Glu-236. Asn-298, Asn-312, and Asn-321 each carry an N-linked (GlcNAc...) asparagine glycan. A BNR 3 repeat occupies Tyr-359–Lys-369. Residue Asn-455 is glycosylated (N-linked (GlcNAc...) asparagine). The Proton donor role is filled by Asp-498. N-linked (GlcNAc...) asparagine glycosylation occurs at Asn-544. The stretch at Tyr-554–Lys-564 is one BNR 4 repeat. Asn-573 and Asn-612 each carry an N-linked (GlcNAc...) asparagine glycan. The BNR 5 repeat unit spans residues Tyr-617–Trp-626. Asn-638 is a glycosylation site (N-linked (GlcNAc...) asparagine). BNR repeat units lie at residues Tyr-658 to Tyr-667, Tyr-705 to Lys-716, and Tyr-759 to Val-769.

The protein belongs to the glycosyl hydrolase 74 family.

It is found in the secreted. It carries out the reaction Hydrolysis of cellobiose from the reducing end of xyloglucans consisting of a beta-(1-&gt;4)-linked glucan carrying alpha-D-xylosyl groups on O-6 of the glucose residues. To be a substrate, the first residue must be unsubstituted, the second residue may bear a xylosyl group, whether further glycosylated or not, and the third residue, which becomes the new terminus by the action of the enzyme, is preferably xylosylated, but this xylose residue must not be further substituted.. In terms of biological role, oligoxyloglucan-reducing end-specific xyloglucanase involved in degradation of xyloglucans. Releases the first two glycosyl segments from oligoxyloglucans. Active against cotton xyloglucan, tamarind xyloglucan and tamarind xyloglucan oligomers. The chain is Oligoxyloglucan-reducing end-specific xyloglucanase (xgcA) from Emericella nidulans (strain FGSC A4 / ATCC 38163 / CBS 112.46 / NRRL 194 / M139) (Aspergillus nidulans).